Here is a 225-residue protein sequence, read N- to C-terminus: Alpha-tubulin N-acetyltransferase 1 (225 aa).

Residues 1–190 (MEFPFDVDAL…NNFVIFEGFF (190 aa)) form the N-acetyltransferase domain. Position 56 is an N6-acetyllysine; by autocatalysis (lysine 56). 124 to 137 (FYIHESLQRHGHGR) serves as a coordination point for acetyl-CoA. Lysine 146 carries the N6-acetyllysine; by autocatalysis modification. 160-169 (SQKLLKFLNK) is a binding site for acetyl-CoA. The interval 195–225 (PPARKLPPKRAEGDIKPYSSSDRESGLPQGW) is disordered. Residues 203–219 (KRAEGDIKPYSSSDRES) show a composition bias toward basic and acidic residues. An N6-acetyllysine; by autocatalysis modification is found at lysine 210.

This sequence belongs to the acetyltransferase ATAT1 family. In terms of assembly, component of the BBSome complex. Interacts with AP2 alpha-adaptins, including AP2A2, but not with AP1 gamma-adaptin (AP1G1/AP1G2); this interaction is required for efficient alpha-tubulin acetylation, hence clathrin-coated pits are sites of microtubule acetylation. Post-translationally, autoacetylation strongly increases tubulin acetylation.

It localises to the cytoplasm. Its subcellular location is the membrane. The protein localises to the clathrin-coated pit. The protein resides in the cell junction. It is found in the focal adhesion. It localises to the cell projection. Its subcellular location is the axon. The protein localises to the cytoskeleton. The protein resides in the spindle. The catalysed reaction is L-lysyl-[alpha-tubulin] + acetyl-CoA = N(6)-acetyl-L-lysyl-[alpha-tubulin] + CoA + H(+). Specifically acetylates 'Lys-40' in alpha-tubulin on the lumenal side of microtubules. Promotes microtubule destabilization and accelerates microtubule dynamics; this activity may be independent of acetylation activity. Acetylates alpha-tubulin with a slow enzymatic rate, due to a catalytic site that is not optimized for acetyl transfer. Enters the microtubule through each end and diffuses quickly throughout the lumen of microtubules. Acetylates only long/old microtubules because of its slow acetylation rate since it does not have time to act on dynamically unstable microtubules before the enzyme is released. Required for normal sperm flagellar function. Promotes directional cell locomotion and chemotaxis, through AP2A2-dependent acetylation of alpha-tubulin at clathrin-coated pits that are concentrated at the leading edge of migrating cells. May facilitate primary cilium assembly. The sequence is that of Alpha-tubulin N-acetyltransferase 1 from Bos taurus (Bovine).